The chain runs to 134 residues: MSWQAYVDDHLMCDIEGHEGHRLTAAAIVGHDGSVWAQSATFPQFKPEEMNGIMTDFNEPGHLAPTGLHLGGTKYMVIQGEAGAVIRGKKGSGGITIKKTGQALVFGIYEEPVTPGQCNMVVERLGDYLLEQGL.

Residues Cys13 and Cys118 are joined by a disulfide bond. The Involved in PIP2 interaction motif lies at 84–100; that stretch reads AVIRGKKGSGGITIKKT. A Phosphothreonine modification is found at Thr114.

The protein belongs to the profilin family. In terms of assembly, occurs in many kinds of cells as a complex with monomeric actin in a 1:1 ratio. Phosphorylated by MAP kinases.

It is found in the cytoplasm. The protein resides in the cytoskeleton. Its function is as follows. Binds to actin and affects the structure of the cytoskeleton. At high concentrations, profilin prevents the polymerization of actin, whereas it enhances it at low concentrations. By binding to PIP2, it inhibits the formation of IP3 and DG. This is Profilin-2 (PRO2) from Olea europaea (Common olive).